Here is a 285-residue protein sequence, read N- to C-terminus: UPF0603 protein At1g54780, chloroplastic (285 aa).

2 disordered regions span residues 1 to 48 and 228 to 251; these read METL…LSTR and GQPDPGGPTVKDSKRESNFKTKEE. Residues 22-40 show a composition bias toward polar residues; it reads HQTKPTSHSLSLSKPTTFS. The segment covering 238–251 has biased composition (basic and acidic residues); it reads KDSKRESNFKTKEE. A helical transmembrane segment spans residues 259–279; that stretch reads FSLVVGGLLVIAFVVPMAQYF.

This sequence belongs to the UPF0603 family.

It is found in the plastid. It localises to the chloroplast thylakoid membrane. The protein is UPF0603 protein At1g54780, chloroplastic of Arabidopsis thaliana (Mouse-ear cress).